The chain runs to 547 residues: GMP synthase [glutamine-hydrolyzing] (547 aa).

The Glutamine amidotransferase type-1 domain maps to 12–210; that stretch reads KILILDFGSQ…VLDIAGAKPD (199 aa). Cys89 (nucleophile) is an active-site residue. Active-site residues include His184 and Glu186. The region spanning 211–403 is the GMPS ATP-PPase domain; the sequence is WIMRDHIEEA…LGLPAEMVYR (193 aa). Position 238–244 (238–244) interacts with ATP; sequence SGGVDSS.

In terms of assembly, homodimer.

The catalysed reaction is XMP + L-glutamine + ATP + H2O = GMP + L-glutamate + AMP + diphosphate + 2 H(+). It participates in purine metabolism; GMP biosynthesis; GMP from XMP (L-Gln route): step 1/1. Catalyzes the synthesis of GMP from XMP. The chain is GMP synthase [glutamine-hydrolyzing] from Burkholderia pseudomallei (strain 1710b).